The sequence spans 351 residues: Protein Wnt-8b (351 aa).

The signal sequence occupies residues M1–S22. Residues C54 and C65 are joined by a disulfide bond. The N-linked (GlcNAc...) asparagine glycan is linked to N103. 10 cysteine pairs are disulfide-bonded: C104/C112, C114/C132, C180/C194, C182/C189, C256/C294, C272/C287, C291/C333, C309/C324, C311/C321, and C316/C317. Residue S186 is the site of O-palmitoleoyl serine attachment. A glycan (N-linked (GlcNAc...) asparagine) is linked at N259.

It belongs to the Wnt family. Palmitoleoylation is required for efficient binding to frizzled receptors. Depalmitoleoylation leads to Wnt signaling pathway inhibition. In terms of processing, proteolytic processing by TIKI1 and TIKI2 promotes oxidation and formation of large disulfide-bond oligomers, leading to inactivation of WNT8B. Expression is restricted to the brain, and more specifically to the forebrain.

The protein localises to the secreted. It localises to the extracellular space. It is found in the extracellular matrix. In terms of biological role, ligand for members of the frizzled family of seven transmembrane receptors. May play an important role in the development and differentiation of certain forebrain structures, notably the hippocampus. This chain is Protein Wnt-8b (WNT8B), found in Homo sapiens (Human).